Here is a 382-residue protein sequence, read N- to C-terminus: Lipid-A-disaccharide synthase (382 aa).

It belongs to the LpxB family.

It catalyses the reaction 2-N,3-O-bis[(3R)-3-hydroxytetradecanoyl]-alpha-D-glucosaminyl 1-phosphate + UDP-2-N,3-O-bis[(3R)-3-hydroxytetradecanoyl]-alpha-D-glucosamine = lipid A disaccharide (E. coli) + UDP + H(+). It carries out the reaction a lipid X + a UDP-2-N,3-O-bis[(3R)-3-hydroxyacyl]-alpha-D-glucosamine = a lipid A disaccharide + UDP + H(+). It functions in the pathway glycolipid biosynthesis; lipid IV(A) biosynthesis; lipid IV(A) from (3R)-3-hydroxytetradecanoyl-[acyl-carrier-protein] and UDP-N-acetyl-alpha-D-glucosamine: step 5/6. Its function is as follows. Condensation of UDP-2,3-diacylglucosamine and 2,3-diacylglucosamine-1-phosphate to form lipid A disaccharide, a precursor of lipid A, a phosphorylated glycolipid that anchors the lipopolysaccharide to the outer membrane of the cell. The sequence is that of Lipid-A-disaccharide synthase from Escherichia coli O17:K52:H18 (strain UMN026 / ExPEC).